The primary structure comprises 554 residues: Phospho-2-dehydro-3-deoxyheptonate aldolase 1, chloroplastic (554 aa).

The transit peptide at 1–39 directs the protein to the chloroplast; it reads MSLATSSSMAGGAAVVPRSATATTASAFVTMKRRATAVR. The interval 41 to 70 is disordered; sequence VHAAEPSKNPPVGVPSAAKTSSPSVAAPEK.

It belongs to the class-II DAHP synthase family.

It is found in the plastid. The protein resides in the chloroplast. It catalyses the reaction D-erythrose 4-phosphate + phosphoenolpyruvate + H2O = 7-phospho-2-dehydro-3-deoxy-D-arabino-heptonate + phosphate. It functions in the pathway metabolic intermediate biosynthesis; chorismate biosynthesis; chorismate from D-erythrose 4-phosphate and phosphoenolpyruvate: step 1/7. This is Phospho-2-dehydro-3-deoxyheptonate aldolase 1, chloroplastic (DAHPS1) from Oryza sativa subsp. japonica (Rice).